A 278-amino-acid polypeptide reads, in one-letter code: Cysteine-rich repeat secretory protein 18 (278 aa).

The first 32 residues, Met1–Ser32, serve as a signal peptide directing secretion. 2 consecutive Gnk2-homologous domains span residues Tyr39–Thr147 and Pro160–Phe267.

The protein belongs to the cysteine-rich repeat secretory protein family.

The protein resides in the secreted. In Arabidopsis thaliana (Mouse-ear cress), this protein is Cysteine-rich repeat secretory protein 18 (CRRSP18).